A 136-amino-acid chain; its full sequence is Large ribosomal subunit protein bL20c (136 aa).

It belongs to the bacterial ribosomal protein bL20 family.

Its subcellular location is the plastid. The protein resides in the chloroplast. Binds directly to 23S ribosomal RNA and is necessary for the in vitro assembly process of the 50S ribosomal subunit. It is not involved in the protein synthesizing functions of that subunit. This is Large ribosomal subunit protein bL20c from Huperzia lucidula (Shining clubmoss).